Reading from the N-terminus, the 505-residue chain is 4-alpha-glucanotransferase (505 aa).

This sequence belongs to the disproportionating enzyme family.

It localises to the cytoplasm. It catalyses the reaction Transfers a segment of a (1-&gt;4)-alpha-D-glucan to a new position in an acceptor, which may be glucose or a (1-&gt;4)-alpha-D-glucan.. In Synechocystis sp. (strain ATCC 27184 / PCC 6803 / Kazusa), this protein is 4-alpha-glucanotransferase (malQ).